A 392-amino-acid polypeptide reads, in one-letter code: MLRWLTAGESHGPALVALLEGVPAGVEVTTEEIAGELARRRLGYGRGARMAFEQDEIEIIGGLRHGVTLGSPVAIRVGNSEWPKWRTVMAPDPVDSTELAGQARNAPLTRPRPGHADLAGMQKYGHTDARPILERASARETAARVAVGTVAKALLRQALGIEVVSHVVELGTVATKPGLRPSPADGDRIDADPLRCLDPEASVRMVAEVDAAKKDADTLGGVVEVLAYGVPPGLGSHVQWDRKLDARLATALMSIQAIKGVEIGDGWQQARSRGSVAHDEIIPTATGVRRVTDRAGGLEGGITTGEPLRVRAAMKPISSLNRALSTVDITSGEPATAINQRSDVCAVPAAGVVAEAMVALVLAEAAVEKFGGDSVVEQRRNLAGYLDALVVR.

NADP(+) is bound by residues Arg40 and Arg46. FMN-binding positions include 135-137 (RAS), 256-257 (QA), Gly300, 315-319 (KPISS), and Arg341.

It belongs to the chorismate synthase family. Homotetramer. It depends on FMNH2 as a cofactor.

It carries out the reaction 5-O-(1-carboxyvinyl)-3-phosphoshikimate = chorismate + phosphate. The protein operates within metabolic intermediate biosynthesis; chorismate biosynthesis; chorismate from D-erythrose 4-phosphate and phosphoenolpyruvate: step 7/7. In terms of biological role, catalyzes the anti-1,4-elimination of the C-3 phosphate and the C-6 proR hydrogen from 5-enolpyruvylshikimate-3-phosphate (EPSP) to yield chorismate, which is the branch point compound that serves as the starting substrate for the three terminal pathways of aromatic amino acid biosynthesis. This reaction introduces a second double bond into the aromatic ring system. The polypeptide is Chorismate synthase (Salinispora tropica (strain ATCC BAA-916 / DSM 44818 / JCM 13857 / NBRC 105044 / CNB-440)).